A 1301-amino-acid polypeptide reads, in one-letter code: DNA-directed RNA polymerase subunit beta (1301 aa).

This sequence belongs to the RNA polymerase beta chain family. As to quaternary structure, in plastids the minimal PEP RNA polymerase catalytic core is composed of four subunits: alpha, beta, beta', and beta''. When a (nuclear-encoded) sigma factor is associated with the core the holoenzyme is formed, which can initiate transcription.

It is found in the plastid. Its subcellular location is the chloroplast. It carries out the reaction RNA(n) + a ribonucleoside 5'-triphosphate = RNA(n+1) + diphosphate. DNA-dependent RNA polymerase catalyzes the transcription of DNA into RNA using the four ribonucleoside triphosphates as substrates. In Chlorella vulgaris (Green alga), this protein is DNA-directed RNA polymerase subunit beta.